Consider the following 251-residue polypeptide: Carbohydrate deacetylase (251 aa).

The Mg(2+) site is built by H59 and H122.

The protein belongs to the YdjC deacetylase family. In terms of assembly, homodimer. The cofactor is Mg(2+).

Its function is as follows. Probably catalyzes the deacetylation of acetylated carbohydrates an important step in the degradation of oligosaccharides. The polypeptide is Carbohydrate deacetylase (Vibrio campbellii (strain ATCC BAA-1116)).